A 211-amino-acid chain; its full sequence is Thiamine-phosphate synthase (211 aa).

Residues 41–45 (QYRDK) and N73 contribute to the 4-amino-2-methyl-5-(diphosphooxymethyl)pyrimidine site. Mg(2+) contacts are provided by D74 and D93. 4-amino-2-methyl-5-(diphosphooxymethyl)pyrimidine is bound at residue T112. Position 139–141 (139–141 (SPT)) interacts with 2-[(2R,5Z)-2-carboxy-4-methylthiazol-5(2H)-ylidene]ethyl phosphate. K142 is a binding site for 4-amino-2-methyl-5-(diphosphooxymethyl)pyrimidine. 2-[(2R,5Z)-2-carboxy-4-methylthiazol-5(2H)-ylidene]ethyl phosphate is bound by residues G169 and 189-190 (VS).

It belongs to the thiamine-phosphate synthase family. Requires Mg(2+) as cofactor.

It carries out the reaction 2-[(2R,5Z)-2-carboxy-4-methylthiazol-5(2H)-ylidene]ethyl phosphate + 4-amino-2-methyl-5-(diphosphooxymethyl)pyrimidine + 2 H(+) = thiamine phosphate + CO2 + diphosphate. The catalysed reaction is 2-(2-carboxy-4-methylthiazol-5-yl)ethyl phosphate + 4-amino-2-methyl-5-(diphosphooxymethyl)pyrimidine + 2 H(+) = thiamine phosphate + CO2 + diphosphate. The enzyme catalyses 4-methyl-5-(2-phosphooxyethyl)-thiazole + 4-amino-2-methyl-5-(diphosphooxymethyl)pyrimidine + H(+) = thiamine phosphate + diphosphate. The protein operates within cofactor biosynthesis; thiamine diphosphate biosynthesis; thiamine phosphate from 4-amino-2-methyl-5-diphosphomethylpyrimidine and 4-methyl-5-(2-phosphoethyl)-thiazole: step 1/1. Condenses 4-methyl-5-(beta-hydroxyethyl)thiazole monophosphate (THZ-P) and 2-methyl-4-amino-5-hydroxymethyl pyrimidine pyrophosphate (HMP-PP) to form thiamine monophosphate (TMP). This chain is Thiamine-phosphate synthase, found in Thioalkalivibrio sulfidiphilus (strain HL-EbGR7).